A 212-amino-acid chain; its full sequence is 7-carboxy-7-deazaguanine synthase (212 aa).

Residues 22-24 and Arg37 each bind substrate; that span reads LQG. Residues 28-212 form the Radical SAM core domain; it reads NTGMPAVFVR…VQTHKWAGIE (185 aa). Positions 41, 45, and 48 each coordinate [4Fe-4S] cluster. Position 50 (Thr50) interacts with Mg(2+). Residue Thr78 participates in substrate binding. S-adenosyl-L-methionine is bound by residues Gly80 and 122 to 124; that span reads SPK.

Belongs to the radical SAM superfamily. 7-carboxy-7-deazaguanine synthase family. In terms of assembly, homodimer. Requires [4Fe-4S] cluster as cofactor. The cofactor is S-adenosyl-L-methionine. Mg(2+) serves as cofactor.

It catalyses the reaction 6-carboxy-5,6,7,8-tetrahydropterin + H(+) = 7-carboxy-7-deazaguanine + NH4(+). It participates in purine metabolism; 7-cyano-7-deazaguanine biosynthesis. Its function is as follows. Catalyzes the complex heterocyclic radical-mediated conversion of 6-carboxy-5,6,7,8-tetrahydropterin (CPH4) to 7-carboxy-7-deazaguanine (CDG), a step common to the biosynthetic pathways of all 7-deazapurine-containing compounds. This Neisseria meningitidis serogroup B (strain ATCC BAA-335 / MC58) protein is 7-carboxy-7-deazaguanine synthase.